The primary structure comprises 476 residues: Cyclase-associated protein 1 (476 aa).

Disordered stretches follow at residues 224-262 and 277-319; these read KPAS…KQGM and GLRK…PPKM. The segment covering 231–243 has biased composition (pro residues); sequence KGPPGAPAPPPAP. Low complexity predominate over residues 246–256; the sequence is SAESSKPSSSS. A compositionally biased stretch (basic and acidic residues) spans 280-293; the sequence is KVTDDMKTKNRADR. The C-CAP/cofactor C-like domain maps to 316-453; that stretch reads PPKMELQMGR…PDGDWVEHAL (138 aa).

It belongs to the CAP family. Expressed in roots, cotyledons, leaves, stems, flowers, pollen and shoots. Not detected in siliques.

Functionally, actin monomer binding protein that accelerates the exchange of ADP for ATP. Regulates the pool of unpolymerized ATP-actin. Key intermediate between actin-depolymerizing factor (ADF)-mediated disassembly and the profilin-based nucleation and elongation machinery. The sequence is that of Cyclase-associated protein 1 (CAP1) from Arabidopsis thaliana (Mouse-ear cress).